The primary structure comprises 699 residues: Tectonic-like complex member Mks1 (699 aa).

Disordered stretches follow at residues 101-121 and 373-396; these read RRSP…EGEI and DGFS…IEED. Positions 108–119 are enriched in basic and acidic residues; sequence HEGEMEKDKNEG. The region spanning 434 to 560 is the C2 B9-type domain; that stretch reads KRVSLLLELQ…RLQCIRPLGN (127 aa). The tract at residues 632–661 is disordered; it reads LELGNDSSDDGDSNDDDVRSSSNPDTSRAT.

As to quaternary structure, probable component of the tectonic-like complex (also named MKS complex), composed of B9d1, B9d2, Cc2d2a, Mks1 and tctn. As to expression, expressed in chordotonal neurons in the antennae (at protein level). Expressed in spermatids (at protein level).

Its subcellular location is the cytoplasm. The protein resides in the cytoskeleton. It localises to the cilium basal body. The protein localises to the microtubule organizing center. It is found in the centrosome. Its subcellular location is the centriole. Functionally, probable component of the tectonic-like complex (also named MKS complex), a complex localized at the transition zone of primary cilia. Required for ciliary structure and function. The sequence is that of Tectonic-like complex member Mks1 from Drosophila melanogaster (Fruit fly).